Reading from the N-terminus, the 161-residue chain is Peptidyl-prolyl cis-trans isomerase-like 3 (161 aa).

S2 bears the N-acetylserine mark. Positions 2–154 (SVTLHTDVGD…NDVHIKDITI (153 aa)) constitute a PPIase cyclophilin-type domain. Residue R61 is modified to Omega-N-methylarginine.

Belongs to the cyclophilin-type PPIase family. PPIL3 subfamily. In terms of assembly, identified in the spliceosome C complex. As to expression, ubiquitous. Detected at low levels.

The catalysed reaction is [protein]-peptidylproline (omega=180) = [protein]-peptidylproline (omega=0). Its function is as follows. PPIases accelerate the folding of proteins. It catalyzes the cis-trans isomerization of proline imidic peptide bonds in oligopeptides. May be involved in pre-mRNA splicing. The chain is Peptidyl-prolyl cis-trans isomerase-like 3 (PPIL3) from Homo sapiens (Human).